Here is a 579-residue protein sequence, read N- to C-terminus: Putative fatty-acid--CoA ligase fadD21 (579 aa).

The protein belongs to the ATP-dependent AMP-binding enzyme family.

This Mycobacterium leprae (strain TN) protein is Putative fatty-acid--CoA ligase fadD21 (fadD21).